Here is a 349-residue protein sequence, read N- to C-terminus: Biotin synthase (349 aa).

A compositionally biased stretch (basic and acidic residues) spans 1–11 (MLEGIEREAAE). The disordered stretch occupies residues 1–30 (MLEGIEREAAEHSNGCSGPAGHAPPAGAPR). The Radical SAM core domain occupies 64–283 (HEVQLCTLLS…IAVARVMMPR (220 aa)). [4Fe-4S] cluster contacts are provided by Cys79, Cys83, and Cys86. Cys123, Cys155, Cys215, and Arg287 together coordinate [2Fe-2S] cluster.

Belongs to the radical SAM superfamily. Biotin synthase family. Homodimer. The cofactor is [4Fe-4S] cluster. Requires [2Fe-2S] cluster as cofactor.

The catalysed reaction is (4R,5S)-dethiobiotin + (sulfur carrier)-SH + 2 reduced [2Fe-2S]-[ferredoxin] + 2 S-adenosyl-L-methionine = (sulfur carrier)-H + biotin + 2 5'-deoxyadenosine + 2 L-methionine + 2 oxidized [2Fe-2S]-[ferredoxin]. It functions in the pathway cofactor biosynthesis; biotin biosynthesis; biotin from 7,8-diaminononanoate: step 2/2. Its function is as follows. Catalyzes the conversion of dethiobiotin (DTB) to biotin by the insertion of a sulfur atom into dethiobiotin via a radical-based mechanism. The sequence is that of Biotin synthase from Sorangium cellulosum (strain So ce56) (Polyangium cellulosum (strain So ce56)).